The primary structure comprises 1345 residues: DNA-directed RNA polymerase subunit beta (1345 aa).

It belongs to the RNA polymerase beta chain family. The RNAP catalytic core consists of 2 alpha, 1 beta, 1 beta' and 1 omega subunit. When a sigma factor is associated with the core the holoenzyme is formed, which can initiate transcription.

The enzyme catalyses RNA(n) + a ribonucleoside 5'-triphosphate = RNA(n+1) + diphosphate. Its function is as follows. DNA-dependent RNA polymerase catalyzes the transcription of DNA into RNA using the four ribonucleoside triphosphates as substrates. This Shewanella oneidensis (strain ATCC 700550 / JCM 31522 / CIP 106686 / LMG 19005 / NCIMB 14063 / MR-1) protein is DNA-directed RNA polymerase subunit beta.